A 129-amino-acid polypeptide reads, in one-letter code: uncharacterized protein (129 aa).

This is an uncharacterized protein from Oryza sativa subsp. indica (Rice).